The primary structure comprises 1267 residues: Clustered mitochondria protein homolog (1267 aa).

TPR repeat units lie at residues 64–102, 420–453, 716–749, 795–830, 904–939, 1010–1043, and 1138–1171; these read YNLK…KPYN, YSFV…LNML, EAHE…MIKE, LVPL…IPAL, RSIC…KSRA, AEKY…YERV, and AYIK…FTKE. The Clu domain occupies 329–586; that stretch reads PTNGPDYLRT…NTYPLDVEFA (258 aa). The span at 1203–1219 shows a compositional bias: polar residues; sequence QQDQTAASGLKQQPQKS. A disordered region spans residues 1203 to 1267; that stretch reads QQDQTAASGL…KSKSKGKNKK (65 aa). Residues 1224–1239 show a composition bias toward basic and acidic residues; the sequence is NKKETTNPDLADKSVD. Residues 1254–1267 are compositionally biased toward basic residues; that stretch reads KTTKKSKSKGKNKK.

Belongs to the CLU family. In terms of assembly, may associate with the eukaryotic translation initiation factor 3 (eIF-3) complex.

The protein localises to the cytoplasm. Functionally, mRNA-binding protein involved in proper cytoplasmic distribution of mitochondria. This chain is Clustered mitochondria protein homolog, found in Candida glabrata (strain ATCC 2001 / BCRC 20586 / JCM 3761 / NBRC 0622 / NRRL Y-65 / CBS 138) (Yeast).